Consider the following 200-residue polypeptide: Adenylate kinase (200 aa).

10 to 15 (GAGKGT) is a binding site for ATP. The segment at 30–59 (STGDMLRAAVAAGTPVGLEAKAVMESGGLV) is NMP. AMP-binding positions include T31, R36, 57 to 59 (GLV), 85 to 88 (GFPR), and Q92. The segment at 126–142 (KRAAETLARGQAVRKDD) is LID. R127 contacts ATP. AMP contacts are provided by R139 and R150. Residue Q178 participates in ATP binding.

This sequence belongs to the adenylate kinase family. As to quaternary structure, monomer.

It localises to the cytoplasm. It carries out the reaction AMP + ATP = 2 ADP. The protein operates within purine metabolism; AMP biosynthesis via salvage pathway; AMP from ADP: step 1/1. In terms of biological role, catalyzes the reversible transfer of the terminal phosphate group between ATP and AMP. Plays an important role in cellular energy homeostasis and in adenine nucleotide metabolism. The chain is Adenylate kinase from Methylobacterium radiotolerans (strain ATCC 27329 / DSM 1819 / JCM 2831 / NBRC 15690 / NCIMB 10815 / 0-1).